The sequence spans 327 residues: rRNA 2'-O-methyltransferase fibrillarin (327 aa).

The disordered stretch occupies residues 1–93 (MKPGFSPRGG…RGNQSGKNVM (93 aa)). Over residues 7–80 (PRGGGFGGRG…GGGRGRGGGR (74 aa)) the composition is skewed to gly residues. 6 positions are modified to asymmetric dimethylarginine: Arg-8, Arg-15, Arg-21, Arg-24, Arg-28, and Arg-31. Residues Lys-90, Lys-108, and Lys-115 each participate in a glycyl lysine isopeptide (Lys-Gly) (interchain with G-Cter in SUMO2) cross-link. N6-acetyllysine is present on Lys-108. Ser-122 bears the Phosphoserine mark. At Lys-127 the chain carries N6-acetyllysine. Residues Ser-130 and Ser-132 each carry the phosphoserine modification. Residues Lys-137, Lys-149, and Lys-164 each participate in a glycyl lysine isopeptide (Lys-Gly) (interchain with G-Cter in SUMO2) cross-link. Residues 178 to 179 (TT) and 197 to 198 (EF) each bind S-adenosyl-L-methionine. N6-acetyllysine is present on residues Lys-211 and Lys-212. S-adenosyl-L-methionine contacts are provided by residues 222–223 (DA) and 242–245 (DVAQ).

This sequence belongs to the methyltransferase superfamily. Fibrillarin family. In terms of assembly, component of box C/D small nucleolar ribonucleoprotein (snoRNP) particles that contain SNU13, FBL, NOP5 and NOP56, plus a guide RNA. It is associated with the U3, U8, U13, X and Y small nuclear RNAs. Component of several ribosomal and nucleolar protein complexes. Part of the small subunit (SSU) processome, composed of more than 70 proteins and the RNA chaperone small nucleolar RNA (snoRNA) U3. Interacts with PRMT5 and UTP20. Interacts with DDX5 and C1QBP. Interacts with NOL11. Interacts with PIH1D1. Interacts with RRP1B. Interacts with NOLC1. Interacts with SDE2. Interacts with NOP2 and NOP56. In terms of processing, ubiquitinated. Ubiquitination leads to proteasomal degradation. Deubiquitinated by USP36. By homology to other fibrillarins, some or all of the N-terminal domain arginines are modified to asymmetric dimethylarginine (DMA). Post-translationally, acetylated by CREBBP/CBP, preventing methylation of 'Gln-105' of histone H2A (H2AQ104me), without affecting rRNA methylation. Deacetylation by SIRT7 restores methylation of 'Gln-105' of histone H2A (H2AQ104me).

Its subcellular location is the nucleus. The protein localises to the nucleolus. It localises to the nucleoplasm. It carries out the reaction L-glutaminyl-[histone H2A] + S-adenosyl-L-methionine = N(5)-methyl-L-glutaminyl-[histone H2A] + S-adenosyl-L-homocysteine + H(+). The enzyme catalyses a ribonucleotide in rRNA + S-adenosyl-L-methionine = a 2'-O-methylribonucleotide in rRNA + S-adenosyl-L-homocysteine + H(+). It catalyses the reaction a ribonucleotide in U6 snRNA + S-adenosyl-L-methionine = a 2'-O-methylribonucleotide in U6 snRNA + S-adenosyl-L-homocysteine + H(+). In terms of biological role, S-adenosyl-L-methionine-dependent methyltransferase that has the ability to methylate both RNAs and proteins. Involved in pre-rRNA processing by catalyzing the site-specific 2'-hydroxyl methylation of ribose moieties in pre-ribosomal RNA. Site specificity is provided by a guide RNA that base pairs with the substrate. Methylation occurs at a characteristic distance from the sequence involved in base pairing with the guide RNA. Probably catalyzes 2'-O-methylation of U6 snRNAs in box C/D RNP complexes. U6 snRNA 2'-O-methylation is required for mRNA splicing fidelity. Also acts as a protein methyltransferase by mediating methylation of 'Gln-105' of histone H2A (H2AQ104me), a modification that impairs binding of the FACT complex and is specifically present at 35S ribosomal DNA locus. Part of the small subunit (SSU) processome, first precursor of the small eukaryotic ribosomal subunit. During the assembly of the SSU processome in the nucleolus, many ribosome biogenesis factors, an RNA chaperone and ribosomal proteins associate with the nascent pre-rRNA and work in concert to generate RNA folding, modifications, rearrangements and cleavage as well as targeted degradation of pre-ribosomal RNA by the RNA exosome. The sequence is that of rRNA 2'-O-methyltransferase fibrillarin (Fbl) from Rattus norvegicus (Rat).